We begin with the raw amino-acid sequence, 108 residues long: uncharacterized protein (108 aa).

Residues 72–94 (LGLHTSVFFFLRIVCMSSAASVF) traverse the membrane as a helical segment.

The protein localises to the membrane. This is an uncharacterized protein from Saccharomyces cerevisiae (strain ATCC 204508 / S288c) (Baker's yeast).